The following is a 395-amino-acid chain: Zinc-regulated GTPase metalloprotein activator 1B (395 aa).

Residues 1–36 (MLPAVGSADEEEDPAEEDCPELVPMETTQSEEEEKS) are disordered. Positions 8–20 (ADEEEDPAEEDCP) are enriched in acidic residues. Positions 17–24 (EDCPELVP) match the psi-PxLVp motif motif. 49 to 56 (GYLGAGKT) contacts GTP. Positions 107, 109, and 110 each coordinate Zn(2+). The CXCC motif motif lies at 107 to 110 (CLCC). GTP-binding positions include 110–114 (CSVKD) and 203–206 (NKTD). The region spanning 274–377 (IVTITFEVPG…ILKQLFIATV (104 aa)) is the CobW C-terminal domain.

The protein belongs to the SIMIBI class G3E GTPase family. ZNG1 subfamily.

It localises to the nucleus. The enzyme catalyses GTP + H2O = GDP + phosphate + H(+). Zinc chaperone that directly transfers zinc cofactor to target metalloproteins, thereby activating them. Catalyzes zinc insertion into the active site of methionine aminopeptidase METAP1, which function to cleave the initiator methionine from polypeptides during or after protein translation. Mechanistically, the N-terminal psi-PxLVp motif binds to the C6H2-type zinc finger of inactive form of METAP1. After formation of the docked complex, zinc is transferred from the CXCC motif in the GTPase domain of ZNG1B to the zinc binding site in the peptidase domain of METAP1 in a process requiring GTP hydrolysis. GTP/GDP exchange is required for release of active METAP1. This Homo sapiens (Human) protein is Zinc-regulated GTPase metalloprotein activator 1B.